The primary structure comprises 447 residues: UDP-N-acetylmuramate--L-alanine ligase (447 aa).

Residue 107–113 participates in ATP binding; the sequence is GTHGKTT.

The protein belongs to the MurCDEF family.

It is found in the cytoplasm. It carries out the reaction UDP-N-acetyl-alpha-D-muramate + L-alanine + ATP = UDP-N-acetyl-alpha-D-muramoyl-L-alanine + ADP + phosphate + H(+). It participates in cell wall biogenesis; peptidoglycan biosynthesis. Cell wall formation. This chain is UDP-N-acetylmuramate--L-alanine ligase, found in Rubrobacter xylanophilus (strain DSM 9941 / JCM 11954 / NBRC 16129 / PRD-1).